The primary structure comprises 370 residues: Sphingosine 1-phosphate receptor 2 (370 aa).

The Extracellular segment spans residues 1–57 (MTTCRLFAGFCQAVTMSKYSQYFNKTLIQVHYLTAKEMTAEELRDRIESKQSLSSLN). Asparagine 24 carries N-linked (GlcNAc...) asparagine glycosylation. A helical transmembrane segment spans residues 58–78 (ILFVVICSIIILENLLVLIAV). Topologically, residues 79 to 87 (FRNKKFHSA) are cytoplasmic. The helical transmembrane segment at 88 to 108 (MFFFIGNLAFSDLLAGSAYIA) threads the bilayer. Residues 109–128 (NIFLSGPRTFHLTPVQWFIR) are Extracellular-facing. A helical membrane pass occupies residues 129–149 (EGTAFIALSASVFSLLAIAIE). The Cytoplasmic segment spans residues 150–167 (RYIAITKVKVYGSNKTCR). Residues 168-193 (MFLLIGACWVMSILLGGLPIIGWNCI) traverse the membrane as a helical segment. The Extracellular segment spans residues 194 to 219 (NNLDDCSAVLPLNTRYYIRFVVTIFS). Residues 220-230 (IILLSIVILYV) form a helical membrane-spanning segment. At 231 to 254 (RIYLIVRTSHQEATNSPAYALLKT) the chain is on the cytoplasmic side. The helical transmembrane segment at 255–275 (VTIVLGVFIICWLPAFTILLL) threads the bilayer. Topologically, residues 276–289 (DTSCKMKQCPILNN) are extracellular. Residues 290 to 310 (AGIFFSFATLNSALNPLIYTL) traverse the membrane as a helical segment. Over 311–370 (RSKDMRKEFLRVLCCWGLLNCGRPPHRCMVPLKSSSSMEHCTNKHEHQSIPIMQDCTTCV) the chain is Cytoplasmic. Residue cysteine 325 is the site of S-palmitoyl cysteine attachment.

It belongs to the G-protein coupled receptor 1 family.

It is found in the cell membrane. Its function is as follows. Receptor for the lysosphingolipid sphingosine 1-phosphate (S1P). S1P receptor is critical for cell migration and epithelial integrity during vertebrate embryogenesis. Receptor for the chemokine-like protein FAM19A5. Mediates the inhibitory effect of FAM19A5 on vascular smooth muscle cell proliferation and migration. The protein is Sphingosine 1-phosphate receptor 2 (s1pr2) of Danio rerio (Zebrafish).